The following is a 373-amino-acid chain: tRNA-specific 2-thiouridylase MnmA (373 aa).

Residues 12 to 19 (GMSGGVDS) and M38 each bind ATP. The segment at 98–100 (NPD) is interaction with target base in tRNA. The Nucleophile role is filled by C103. A disulfide bridge connects residues C103 and C200. G127 is an ATP binding site. Positions 150–152 (KDQ) are interaction with tRNA. C200 serves as the catalytic Cysteine persulfide intermediate. The interaction with tRNA stretch occupies residues 312–313 (RY).

This sequence belongs to the MnmA/TRMU family.

It localises to the cytoplasm. The catalysed reaction is S-sulfanyl-L-cysteinyl-[protein] + uridine(34) in tRNA + AH2 + ATP = 2-thiouridine(34) in tRNA + L-cysteinyl-[protein] + A + AMP + diphosphate + H(+). Catalyzes the 2-thiolation of uridine at the wobble position (U34) of tRNA, leading to the formation of s(2)U34. This Streptococcus pneumoniae (strain P1031) protein is tRNA-specific 2-thiouridylase MnmA.